The sequence spans 271 residues: MKAASREALATVESKLDEFLSGDRSVATATQAGQDLFEVVRVLDGDRELRVALTDDASTSEERKSLVQTLFGGKVSPVALQVLQEAAAAQWSTPRDIARGLIILGRRALLRGAEFEGKLGQVEDELFSLSRVLDREGELTQLLSDRTATSDRKVGLLASVLYGKVTMVTEALALQAIGRPEQNPIDDLAGLADTAAKLQGRTIARVTSAGELNDSQRAALAEKLGKIYGRAMSIHSEVDTSLLGGMTIRVGDEVIDGSTAGKIARLRAQMA.

Belongs to the ATPase delta chain family. F-type ATPases have 2 components, F(1) - the catalytic core - and F(0) - the membrane proton channel. F(1) has five subunits: alpha(3), beta(3), gamma(1), delta(1), epsilon(1). F(0) has three main subunits: a(1), b(2) and c(10-14). The alpha and beta chains form an alternating ring which encloses part of the gamma chain. F(1) is attached to F(0) by a central stalk formed by the gamma and epsilon chains, while a peripheral stalk is formed by the delta and b chains.

It is found in the cell membrane. F(1)F(0) ATP synthase produces ATP from ADP in the presence of a proton or sodium gradient. F-type ATPases consist of two structural domains, F(1) containing the extramembraneous catalytic core and F(0) containing the membrane proton channel, linked together by a central stalk and a peripheral stalk. During catalysis, ATP synthesis in the catalytic domain of F(1) is coupled via a rotary mechanism of the central stalk subunits to proton translocation. Its function is as follows. This protein is part of the stalk that links CF(0) to CF(1). It either transmits conformational changes from CF(0) to CF(1) or is implicated in proton conduction. In Corynebacterium aurimucosum (strain ATCC 700975 / DSM 44827 / CIP 107346 / CN-1) (Corynebacterium nigricans), this protein is ATP synthase subunit delta.